The sequence spans 315 residues: Hydroxysteroid 11-beta-dehydrogenase 1-like protein (315 aa).

The N-terminal stretch at 1–15 is a signal peptide; that stretch reads MKVLLLTGLGALFFA. NADP(+) contacts are provided by residues 36-62, 87-88, and 114-116; these read GANA…TAHT, DM, and NHI. S165 contacts substrate. The active-site Proton acceptor is Y178. NADP(+) contacts are provided by residues 178 to 182 and 211 to 217; these read YSAAK and GLRDRAS. The segment at 221–286 is disordered; sequence AVRSSTSRPR…SKTEKNDGHL (66 aa). Over residues 277–286 the composition is skewed to basic and acidic residues; that stretch reads SKTEKNDGHL.

It belongs to the short-chain dehydrogenases/reductases (SDR) family. Highly expressed in the brain.

It localises to the secreted. It catalyses the reaction cortisone + NADPH + H(+) = cortisol + NADP(+). Its function is as follows. Unidirectional NADP(+)-dependent cortisol dehydrogenase (in vitro). This chain is Hydroxysteroid 11-beta-dehydrogenase 1-like protein (HSD11B1L), found in Homo sapiens (Human).